The following is a 153-amino-acid chain: MLLRDLVPRHGCCWPSLLLHCALHPLWGLVQVTHAEPQKSCSKVTDSCQHICQCRPPPPLPPPPPPPPPPRLLSAPAPNSTSCPAEDSWWSGLVIIVAVVCASLVFLTVLVIICYKAIKRKPLRKDENGTSVAEYPMSSSQSHKGVDVNAAVV.

Residues 1–35 (MLLRDLVPRHGCCWPSLLLHCALHPLWGLVQVTHA) form the signal peptide. The Extracellular segment spans residues 36-92 (EPQKSCSKVTDSCQHICQCRPPPPLPPPPPPPPPPRLLSAPAPNSTSCPAEDSWWSG). In terms of domain architecture, PRAD spans 56–70 (PPPPLPPPPPPPPPP). The span at 59–71 (PLPPPPPPPPPPR) shows a compositional bias: pro residues. The segment at 59–79 (PLPPPPPPPPPPRLLSAPAPN) is disordered. An N-linked (GlcNAc...) asparagine glycan is attached at Asn-79. A helical membrane pass occupies residues 93-113 (LVIIVAVVCASLVFLTVLVII). Over 114 to 153 (CYKAIKRKPLRKDENGTSVAEYPMSSSQSHKGVDVNAAVV) the chain is Cytoplasmic. A disordered region spans residues 129-153 (GTSVAEYPMSSSQSHKGVDVNAAVV).

Interacts with ACHE, probably through disulfide bonds. Predominantly expressed in the central nervous system, including in the brain. Also expressed in muscle, heart and kidney. Isoform 1 may be predominant in the cortex and striatum, while isoform 2 is more abundant in the cerebellum.

The protein resides in the cell membrane. It localises to the cell junction. It is found in the synapse. In terms of biological role, required to anchor acetylcholinesterase (ACHE) to the basal lamina of the neuromuscular junction and to the membrane of neuronal synapses in brain. Also able to organize ACHE into tetramers. The sequence is that of Proline-rich membrane anchor 1 (Prima1) from Mus musculus (Mouse).